A 326-amino-acid chain; its full sequence is Beta-ketoacyl-[acyl-carrier-protein] synthase III 2 (326 aa).

Catalysis depends on residues cysteine 114 and histidine 251. Positions 252-256 are ACP-binding; the sequence is SANAR. Asparagine 281 is an active-site residue.

Belongs to the thiolase-like superfamily. FabH family. In terms of assembly, homodimer.

The protein localises to the cytoplasm. The catalysed reaction is malonyl-[ACP] + acetyl-CoA + H(+) = 3-oxobutanoyl-[ACP] + CO2 + CoA. It functions in the pathway lipid metabolism; fatty acid biosynthesis. In terms of biological role, catalyzes the condensation reaction of fatty acid synthesis by the addition to an acyl acceptor of two carbons from malonyl-ACP. Catalyzes the first condensation reaction which initiates fatty acid synthesis and may therefore play a role in governing the total rate of fatty acid production. Possesses both acetoacetyl-ACP synthase and acetyl transacylase activities. Its substrate specificity determines the biosynthesis of branched-chain and/or straight-chain of fatty acids. This is Beta-ketoacyl-[acyl-carrier-protein] synthase III 2 from Staphylococcus epidermidis (strain ATCC 12228 / FDA PCI 1200).